The chain runs to 253 residues: Bridging integrator 3 (253 aa).

Residues 9-232 (GQPKKQIVSK…LDQPGHSDEH (224 aa)) form the BAR domain. 2 coiled-coil regions span residues 16–57 (VSKT…AMSK) and 120–151 (SLNM…KEKT).

Its subcellular location is the cytoplasm. It is found in the cytoskeleton. In terms of biological role, involved in cytokinesis and septation where it has a role in the localization of F-actin. This is Bridging integrator 3 (Bin3) from Rattus norvegicus (Rat).